The following is a 234-amino-acid chain: Uridylate kinase (234 aa).

10-11 serves as a coordination point for ATP; the sequence is GS. Glycine 44 is a UMP binding site. ATP contacts are provided by glycine 45 and arginine 49. Residues aspartate 66 and 114–120 contribute to the UMP site; that span reads ITPAQTT. Residues threonine 140, tyrosine 146, and aspartate 149 each coordinate ATP.

It belongs to the UMP kinase family. Homohexamer.

Its subcellular location is the cytoplasm. It carries out the reaction UMP + ATP = UDP + ADP. Its pathway is pyrimidine metabolism; CTP biosynthesis via de novo pathway; UDP from UMP (UMPK route): step 1/1. With respect to regulation, inhibited by UTP. Its function is as follows. Catalyzes the reversible phosphorylation of UMP to UDP. This Methanoculleus marisnigri (strain ATCC 35101 / DSM 1498 / JR1) protein is Uridylate kinase.